Reading from the N-terminus, the 116-residue chain is Urease subunit beta (116 aa).

Residues 97–116 are disordered; the sequence is IQGPLDAGTAETAPGLPQQP.

It belongs to the urease beta subunit family. Heterotrimer of UreA (gamma), UreB (beta) and UreC (alpha) subunits. Three heterotrimers associate to form the active enzyme.

It is found in the cytoplasm. The enzyme catalyses urea + 2 H2O + H(+) = hydrogencarbonate + 2 NH4(+). The protein operates within nitrogen metabolism; urea degradation; CO(2) and NH(3) from urea (urease route): step 1/1. The protein is Urease subunit beta of Paracidovorax citrulli (strain AAC00-1) (Acidovorax citrulli).